Reading from the N-terminus, the 876-residue chain is DNA mismatch repair protein MutS (876 aa).

626–633 serves as a coordination point for ATP; sequence GPNMGGKS.

This sequence belongs to the DNA mismatch repair MutS family.

In terms of biological role, this protein is involved in the repair of mismatches in DNA. It is possible that it carries out the mismatch recognition step. This protein has a weak ATPase activity. The chain is DNA mismatch repair protein MutS from Bordetella bronchiseptica (strain ATCC BAA-588 / NCTC 13252 / RB50) (Alcaligenes bronchisepticus).